A 266-amino-acid chain; its full sequence is 4-hydroxy-tetrahydrodipicolinate reductase (266 aa).

NAD(+)-binding positions include 8 to 13 and Glu33; that span reads GAAGRM. Residue Arg34 participates in NADP(+) binding. NAD(+)-binding positions include 97–99 and 121–124; these read GST and APNM. His154 acts as the Proton donor/acceptor in catalysis. His155 is a (S)-2,3,4,5-tetrahydrodipicolinate binding site. Lys158 functions as the Proton donor in the catalytic mechanism. 164–165 contributes to the (S)-2,3,4,5-tetrahydrodipicolinate binding site; sequence GT.

The protein belongs to the DapB family.

It is found in the cytoplasm. It carries out the reaction (S)-2,3,4,5-tetrahydrodipicolinate + NAD(+) + H2O = (2S,4S)-4-hydroxy-2,3,4,5-tetrahydrodipicolinate + NADH + H(+). It catalyses the reaction (S)-2,3,4,5-tetrahydrodipicolinate + NADP(+) + H2O = (2S,4S)-4-hydroxy-2,3,4,5-tetrahydrodipicolinate + NADPH + H(+). It participates in amino-acid biosynthesis; L-lysine biosynthesis via DAP pathway; (S)-tetrahydrodipicolinate from L-aspartate: step 4/4. Catalyzes the conversion of 4-hydroxy-tetrahydrodipicolinate (HTPA) to tetrahydrodipicolinate. The polypeptide is 4-hydroxy-tetrahydrodipicolinate reductase (Geobacter sulfurreducens (strain ATCC 51573 / DSM 12127 / PCA)).